Reading from the N-terminus, the 468-residue chain is Tyrosine-protein phosphatase YopH (468 aa).

Positions 127–194 are disordered; sequence ARGHVSSHSH…TVSPYGPEAR (68 aa). Residues 130–140 show a composition bias toward low complexity; sequence HVSSHSHSVLH. The region spanning 152 to 461 is the Tyrosine-protein phosphatase domain; the sequence is SHLDPRTPPL…DVLIKLAEGQ (310 aa). The active-site Phosphocysteine intermediate is the C403.

This sequence belongs to the protein-tyrosine phosphatase family. Non-receptor class subfamily. As to quaternary structure, monomer.

Its subcellular location is the secreted. The enzyme catalyses O-phospho-L-tyrosyl-[protein] + H2O = L-tyrosyl-[protein] + phosphate. Essential virulence determinant. This protein is a protein tyrosine phosphatase. The essential function of YopH in Yersinia pathogenesis is host-protein dephosphorylation. It contributes to the ability of the bacteria to resist phagocytosis by peritoneal macrophages. The chain is Tyrosine-protein phosphatase YopH (yopH) from Yersinia enterocolitica.